The chain runs to 226 residues: Ribonuclease 3 (226 aa).

An RNase III domain is found at 7 to 129 (DARLQQALGY…LFGAVFLDAG (123 aa)). Glu-42 is a binding site for Mg(2+). Asp-46 is an active-site residue. Mg(2+)-binding residues include Asp-115 and Glu-118. Glu-118 is an active-site residue. The DRBM domain maps to 156–226 (DPKTRLQEIL…ARQACAELQR (71 aa)).

Belongs to the ribonuclease III family. In terms of assembly, homodimer. Requires Mg(2+) as cofactor.

It is found in the cytoplasm. The enzyme catalyses Endonucleolytic cleavage to 5'-phosphomonoester.. In terms of biological role, digests double-stranded RNA. Involved in the processing of primary rRNA transcript to yield the immediate precursors to the large and small rRNAs (23S and 16S). Processes some mRNAs, and tRNAs when they are encoded in the rRNA operon. Processes pre-crRNA and tracrRNA of type II CRISPR loci if present in the organism. This Thiobacillus denitrificans (strain ATCC 25259 / T1) protein is Ribonuclease 3.